Here is a 122-residue protein sequence, read N- to C-terminus: RxLR effector protein Avh52 (122 aa).

A signal peptide spans 1–21 (MRLTSILVLVIAATFHTTGTA). The short motif at 50 to 68 (RLLRRVEKDKVDYEQDEQR) is the RxLR-dEER element. Residues 69–86 (SFGALKDAVKKLNPVTAV) form a TAP1-binding region. A nuclear localization signal (NLS) region spans residues 87 to 98 (KKFFKQRAKRKK).

This sequence belongs to the RxLR effector family. In terms of assembly, interacts with host acetyl transferase TAP1.

Its subcellular location is the secreted. It is found in the host nucleus. In terms of biological role, effector that suppresses plant defense responses during the early stages of pathogen infection. Suppresses cell death induced by effectors and PAMPs in plant hosts. Interacts with host acetyltransferase TAP1 and causes TAP1 relocation into the nucleus where it acetylates histones H2A and H3 during early infection, thereby promoting susceptibility of host plant to P.sojae. The sequence is that of RxLR effector protein Avh52 from Phytophthora sojae (strain P6497) (Soybean stem and root rot agent).